Reading from the N-terminus, the 155-residue chain is Ribosome maturation factor RimP (155 aa).

This sequence belongs to the RimP family.

The protein resides in the cytoplasm. In terms of biological role, required for maturation of 30S ribosomal subunits. The protein is Ribosome maturation factor RimP of Staphylococcus haemolyticus (strain JCSC1435).